The sequence spans 293 residues: Ribosomal protein L11 methyltransferase (293 aa).

4 residues coordinate S-adenosyl-L-methionine: threonine 145, glycine 166, aspartate 188, and asparagine 230.

Belongs to the methyltransferase superfamily. PrmA family.

Its subcellular location is the cytoplasm. It catalyses the reaction L-lysyl-[protein] + 3 S-adenosyl-L-methionine = N(6),N(6),N(6)-trimethyl-L-lysyl-[protein] + 3 S-adenosyl-L-homocysteine + 3 H(+). Methylates ribosomal protein L11. This is Ribosomal protein L11 methyltransferase from Enterobacter sp. (strain 638).